The sequence spans 313 residues: Ornithine carbamoyltransferase (313 aa).

Carbamoyl phosphate-binding positions include 57–60 (STRT), glutamine 84, arginine 108, and 135–138 (HPTQ). L-ornithine is bound by residues asparagine 167, aspartate 231, and 235–236 (SM). Carbamoyl phosphate-binding positions include 272-273 (CL) and arginine 300.

The protein belongs to the aspartate/ornithine carbamoyltransferase superfamily. OTCase family.

It localises to the cytoplasm. It carries out the reaction carbamoyl phosphate + L-ornithine = L-citrulline + phosphate + H(+). It participates in amino-acid biosynthesis; L-arginine biosynthesis; L-arginine from L-ornithine and carbamoyl phosphate: step 1/3. In terms of biological role, reversibly catalyzes the transfer of the carbamoyl group from carbamoyl phosphate (CP) to the N(epsilon) atom of ornithine (ORN) to produce L-citrulline. In Caldanaerobacter subterraneus subsp. tengcongensis (strain DSM 15242 / JCM 11007 / NBRC 100824 / MB4) (Thermoanaerobacter tengcongensis), this protein is Ornithine carbamoyltransferase.